The following is a 60-amino-acid chain: uncharacterized protein (60 aa).

This is an uncharacterized protein from Dryophytes versicolor (chameleon treefrog).